A 561-amino-acid chain; its full sequence is Asparagine synthetase [glutamine-hydrolyzing] (561 aa).

The active-site For GATase activity is Cys-2. In terms of domain architecture, Glutamine amidotransferase type-2 spans 2-191; it reads CGIWALFGSD…PGHYEVLDLK (190 aa). L-glutamine-binding positions include 49–53, 75–77, and Asp-97; these read RLAVV and NGE. Positions 213 to 536 constitute an Asparagine synthetase domain; it reads HALYDGVEKL…PGRADWLPHY (324 aa). Residues Leu-256, Ile-288, and 363–364 each bind ATP; that span reads SG. At Lys-385 the chain carries N6-acetyllysine. Thr-545 carries the phosphothreonine modification.

The catalysed reaction is L-aspartate + L-glutamine + ATP + H2O = L-asparagine + L-glutamate + AMP + diphosphate + H(+). The protein operates within amino-acid biosynthesis; L-asparagine biosynthesis; L-asparagine from L-aspartate (L-Gln route): step 1/1. The polypeptide is Asparagine synthetase [glutamine-hydrolyzing] (ASNS) (Bos taurus (Bovine)).